The following is a 273-amino-acid chain: Nitrogenase iron protein (273 aa).

ATP is bound at residue 8–15 (GKGGIGKS). Residue cysteine 94 participates in [4Fe-4S] cluster binding. The residue at position 97 (arginine 97) is an ADP-ribosylarginine; by dinitrogenase reductase ADP-ribosyltransferase. Cysteine 130 provides a ligand contact to [4Fe-4S] cluster.

The protein belongs to the NifH/BchL/ChlL family. As to quaternary structure, homodimer. The cofactor is [4Fe-4S] cluster. The reversible ADP-ribosylation of Arg-97 inactivates the nitrogenase reductase and regulates nitrogenase activity.

The catalysed reaction is N2 + 8 reduced [2Fe-2S]-[ferredoxin] + 16 ATP + 16 H2O = H2 + 8 oxidized [2Fe-2S]-[ferredoxin] + 2 NH4(+) + 16 ADP + 16 phosphate + 6 H(+). Functionally, the key enzymatic reactions in nitrogen fixation are catalyzed by the nitrogenase complex, which has 2 components: the iron protein and the molybdenum-iron protein. In Desulforapulum autotrophicum (strain ATCC 43914 / DSM 3382 / VKM B-1955 / HRM2) (Desulfobacterium autotrophicum), this protein is Nitrogenase iron protein.